A 144-amino-acid polypeptide reads, in one-letter code: Transcription antitermination protein NusB (144 aa).

It belongs to the NusB family.

In terms of biological role, involved in transcription antitermination. Required for transcription of ribosomal RNA (rRNA) genes. Binds specifically to the boxA antiterminator sequence of the ribosomal RNA (rrn) operons. The chain is Transcription antitermination protein NusB from Haemophilus influenzae (strain 86-028NP).